Reading from the N-terminus, the 591-residue chain is MKYILVTGGVISGIGKGVIASSIGTILKSSNLHVTSIKIDPYINIDAGTFSPYEHGEVFVLDDGGEVDLDLGNYERFLDIRLTKDNNLTTGKIYQSVINKERKGDYLGKTVQVVPHITDAIQEWVMRQALIPVDEDGIEPEVCVIELGGTVGDIESMPFVEAFRQFQFKVRRENFCNIHVSLVPQPSATGEQKTKPTQNSVRELRGLGLSPDLVVCRCSTPLDTSVKEKISMFCHVEPQQVICVHDVSSIYRVPLLLEEQGVVDYFRQRLDLPIGRQPRRLLMKWKEMADRYERLLESCSIALVGKYTKFSDSYASVIKALEHSALAINHRLEIKYIDSADLEQETLQEEPVRYHEAWQKLCSSEGILVPGGFGVRGTEGKIQAIAWARKQKKPFLGVCLGMQLAVVEFARDVLGWTDANSTEFNPKTSHPVVIDMPEHNPGQMGGTMRLGKRRTIFHSQNSIMKKLYGGHEYVEERHRHRYEVNPELRRELEVRGLKFVGQDTEGERMEIVELEDHPYFVGVQYHPEFLSRPIKPSPPYFGLLLASVGRLSQYIERGCRLSPRDTYSDRSENSSPDAEIAELKLPMIDHD.

One can recognise a Glutamine amidotransferase type-1 domain in the interval 300–554; sequence SIALVGKYTK…LASVGRLSQY (255 aa). Residues Cys399, His526, and Glu528 each act as for GATase activity in the active site.

Belongs to the CTP synthase family.

The catalysed reaction is UTP + L-glutamine + ATP + H2O = CTP + L-glutamate + ADP + phosphate + 2 H(+). Its pathway is pyrimidine metabolism; CTP biosynthesis via de novo pathway; CTP from UDP: step 2/2. In terms of biological role, this enzyme is involved in the de novo synthesis of CTP, a precursor of DNA, RNA and phospholipids. Catalyzes the ATP-dependent amination of UTP to CTP with either L-glutamine or ammonia as a source of nitrogen. The sequence is that of CTP synthase 1-A (ctps1-a) from Xenopus laevis (African clawed frog).